The sequence spans 776 residues: MNPEEQIVTWLISLGVLESPKKTICDPEEFLKSSLKNGVVLCKLINRLMPGSVEKFCLDPQTEADCINNINDFLKGCATLQVEIFDPDDLYSGVNFSKVLSTLLAVNKATEDQLSERPCGRSSSLSAANTSQTNPQGAVSSTVSGLQRQSKTVEMTENGSHQLIVKARFNFKQTNEDELSVCKGDIIYVTRVEEGGWWEGTLNGRTGWFPSNYVREIKSSERPLSPKAVKGFETAPLTKNYYTVVLQNILDTEKEYAKELQSLLVTYLRPLQSNNNLSTVEVTSLLGNFEEVCTFQQTLCQALEECSKFPENQHKVGGCLLSLMPHFKSMYLAYCANHPSAVNVLTQHSDELEQFMENQGASSPGILILTTNLSKPFMRLEKYVTLLQELERHMEDTHPDHQDILKAIVAFKTLMGQCQDLRKRKQLELQILSEPIQAWEGEDIKNLGNVIFMSQVMVQYGACEEKEERYLMLFSNVLIMLSASPRMSGFIYQGKIPIAGTVVTRLDEIEGNDCTFEITGNTVERIVVHCNNNQDFQEWLEQLNRLIRGPASCSSLSKTSSSSCSAHSSFSSTGQPRGPLEPPQIIKPWSLSCLRPAPPLRPSAALGYKERMSYILKESSKSPKTMKKFLHKRKTERKPSEEEYVIRKSTAALEEDAQILKVIEAYCTSANFQQGHGSSTRKDSIPQVLLPEEEKLIIEETRSNGQTIMEEKSLVDTVYALKDEVRELKQENKRMKQCLEEELKSRRDLEKLVRRLLKQTDECIRGESSSKTSILP.

The Calponin-homology (CH) domain occupies Met-1–Glu-111. The interval Ser-115–Lys-151 is disordered. Residues Arg-121–Lys-151 show a composition bias toward polar residues. Ser-126 carries the post-translational modification Phosphoserine. Thr-133 bears the Phosphothreonine mark. 2 positions are modified to phosphoserine: Ser-144 and Ser-150. One can recognise an SH3 domain in the interval Ser-160–Ser-219. Phosphoserine is present on Ser-225. The DH domain maps to Tyr-241 to Leu-421. The 106-residue stretch at Asp-443–Arg-548 folds into the PH domain. Residue Ser-488 is modified to Phosphoserine. The segment covering Ser-561–Ser-572 has biased composition (low complexity). The segment at Ser-561 to Glu-581 is disordered. Ser-640 and Ser-684 each carry phosphoserine.

In terms of assembly, interacts with PAK kinases through the SH3 domain. Interacts with GIT1. Component of cytoplasmic complexes, which also contain PXN, GIT1 and PAK1. Interacts with PARVB. Interacts with BIN2. Identified in a complex with BIN2 and GIT2. Interacts with PARVG; the guanine nucleotide exchange factor activity of ARHGEF6 is essential for PARVG-induced enhancement of cell spreading. In terms of tissue distribution, ubiquitous.

It is found in the cell projection. It localises to the lamellipodium. Acts as a RAC1 guanine nucleotide exchange factor (GEF). This Homo sapiens (Human) protein is Rho guanine nucleotide exchange factor 6 (ARHGEF6).